A 426-amino-acid polypeptide reads, in one-letter code: Ankyrin repeat-containing protein BDA1 (426 aa).

6 ANK repeats span residues 1 to 29 (MDSKLLLVTQSGSVDDLYSLIQAAPDILQ), 36 to 65 (IIHTPLHEASSAGKLDLAMELMILKPSFAK), 70 to 99 (YGLSPLHLAVENDQVELALELVKVDPSLVR), 104 to 134 (GGMTPLHLVAKKGDVDLLTDFLLACPESIKD), 138 to 167 (NGETILHITIMNDKYEQLKVLTGWMQKMRD), and 182 to 212 (GGNTVLHLAAYENNDKVVKQLVKCLSLDRNI). A run of 4 helical transmembrane segments spans residues 288–308 (ALLVIAALIISATFQTAAQLL), 329–349 (WGCNTVAFSIAILFSFILLPV), 355–375 (WWYFIITVPLVFSYFLLMYMM), and 380–400 (FFFLIIYEGGLFLVYLLVLYV).

The protein resides in the cell membrane. Functionally, involved in plant defense. Required for basal resistance against Pseudomonas syringae pv. tomato DC3000. Required for resistance against nonpathogenic bacteria. May be involved in signaling components that function downstream of SNC2 and upstream of NPR1 and WRKY70 to regulate defense responses. This chain is Ankyrin repeat-containing protein BDA1, found in Arabidopsis thaliana (Mouse-ear cress).